The chain runs to 466 residues: IQ domain-containing protein C (466 aa).

The 30-residue stretch at 6–35 folds into the IQ domain; sequence LVRKVSALQACVRGFLVRRQFQSLRAEYEA. 4 disordered regions span residues 105–157, 214–233, 238–310, and 394–466; these read KSGE…PHSQ, EQACERDQSQPSAPLEDQSY, TGEL…QTFG, and VLDL…EPPG. Positions 132–153 are enriched in basic and acidic residues; sequence PSQEKTRDTTRMENPEATDQRL. Over residues 282 to 293 the composition is skewed to polar residues; that stretch reads GPPSSIPSNSQA. Residues 297–306 show a composition bias toward basic and acidic residues; the sequence is RLTKGPDDGR. Serine 438 is subject to Phosphoserine.

This chain is IQ domain-containing protein C (IQCC), found in Homo sapiens (Human).